The chain runs to 97 residues: MRGHKPTLKEYVLDLYPEPTDLYCYEQLSDSSDEDEGLDRPDGQAQPATADYYIVTCCHTCNTTVRLCVNSTASDLRTIQQLLMGTVNIVCPTCAQQ.

The segment at 1 to 40 (MRGHKPTLKEYVLDLYPEPTDLYCYEQLSDSSDEDEGLDR) is E7 terminal domain. The short motif at 22–26 (LYCYE) is the LXCXE motif; interaction with host RB1 and TMEM173/STING element. A zinc finger lies at 58 to 94 (CHTCNTTVRLCVNSTASDLRTIQQLLMGTVNIVCPTC). The Nuclear export signal motif lies at 76–84 (LRTIQQLLM).

This sequence belongs to the papillomaviridae E7 protein family. As to quaternary structure, homodimer. Homooligomer. Interacts with host RB1; this interaction induces dissociation of RB1-E2F1 complex thereby disrupting RB1 activity. Interacts with host EP300; this interaction represses EP300 transcriptional activity. Interacts with protein E2; this interaction inhibits E7 oncogenic activity. Interacts with host TMEM173/STING; this interaction impairs the ability of TMEM173/STING to sense cytosolic DNA and promote the production of type I interferon (IFN-alpha and IFN-beta). Post-translationally, highly phosphorylated.

The protein resides in the host cytoplasm. Its subcellular location is the host nucleus. In terms of biological role, plays a role in viral genome replication by driving entry of quiescent cells into the cell cycle. Stimulation of progression from G1 to S phase allows the virus to efficiently use the cellular DNA replicating machinery to achieve viral genome replication. E7 protein has both transforming and trans-activating activities. Induces the disassembly of the E2F1 transcription factor from RB1, with subsequent transcriptional activation of E2F1-regulated S-phase genes. Interferes with host histone deacetylation mediated by HDAC1 and HDAC2, leading to transcription activation. Also plays a role in the inhibition of both antiviral and antiproliferative functions of host interferon alpha. Interaction with host TMEM173/STING impairs the ability of TMEM173/STING to sense cytosolic DNA and promote the production of type I interferon (IFN-alpha and IFN-beta). The sequence is that of Protein E7 from Human papillomavirus 33.